The primary structure comprises 427 residues: Serine/threonine-protein kinase ssn3 (427 aa).

One can recognise a Protein kinase domain in the interval 40-369; the sequence is YHIVGFISSG…AQEALEHPYF (330 aa). ATP contacts are provided by residues 46-54 and lysine 70; that span reads ISSGTYGRV. Aspartate 172 acts as the Proton acceptor in catalysis. The segment covering 390–399 has biased composition (basic and acidic residues); the sequence is RRVTQDDNDI. A disordered region spans residues 390-427; that stretch reads RRVTQDDNDIRSGSLPGTKRSGLPDDSLLGRATKRLKE.

It belongs to the protein kinase superfamily. CMGC Ser/Thr protein kinase family. CDC2/CDKX subfamily. As to quaternary structure, component of the srb8-11 complex, a regulatory module of the Mediator complex. Requires Mg(2+) as cofactor.

It localises to the nucleus. The catalysed reaction is L-seryl-[protein] + ATP = O-phospho-L-seryl-[protein] + ADP + H(+). It catalyses the reaction L-threonyl-[protein] + ATP = O-phospho-L-threonyl-[protein] + ADP + H(+). The enzyme catalyses [DNA-directed RNA polymerase] + ATP = phospho-[DNA-directed RNA polymerase] + ADP + H(+). Its function is as follows. Component of the srb8-11 complex. The srb8-11 complex is a regulatory module of the Mediator complex which is itself involved in regulation of basal and activated RNA polymerase II-dependent transcription. The srb8-11 complex may be involved in the transcriptional repression of a subset of genes regulated by Mediator. It may inhibit the association of the Mediator complex with RNA polymerase II to form the holoenzyme complex. The srb8-11 complex phosphorylates the C-terminal domain (CTD) of the largest subunit of RNA polymerase II. The sequence is that of Serine/threonine-protein kinase ssn3 (ssn3) from Aspergillus niger (strain ATCC MYA-4892 / CBS 513.88 / FGSC A1513).